Reading from the N-terminus, the 505-residue chain is Maturase K (505 aa).

Belongs to the intron maturase 2 family. MatK subfamily.

Its subcellular location is the plastid. The protein resides in the chloroplast. Functionally, usually encoded in the trnK tRNA gene intron. Probably assists in splicing its own and other chloroplast group II introns. The polypeptide is Maturase K (Idiospermum australiense (Ribbonwood tree)).